Consider the following 309-residue polypeptide: Probable RuBisCO transcriptional regulator (309 aa).

The HTH lysR-type domain occupies 5 to 62 (FTLQQLRILKAIATEKSFTRAAEVLFVSQPSLSKQIKTLESRLNISLLNRENNIVSLT). The segment at residues 22 to 41 (FTRAAEVLFVSQPSLSKQIK) is a DNA-binding region (H-T-H motif).

It belongs to the LysR transcriptional regulatory family.

The protein localises to the plastid. It localises to the chloroplast. Trans-acting transcriptional regulator of RuBisCO genes (rbcL and rbcS) expression. In Trieres chinensis (Marine centric diatom), this protein is Probable RuBisCO transcriptional regulator (rbcR).